Here is an 85-residue protein sequence, read N- to C-terminus: Large ribosomal subunit protein bL27 (85 aa).

The protein belongs to the bacterial ribosomal protein bL27 family.

The protein is Large ribosomal subunit protein bL27 of Azobacteroides pseudotrichonymphae genomovar. CFP2.